Here is a 337-residue protein sequence, read N- to C-terminus: Cysteine synthase 3 (337 aa).

An N6-(pyridoxal phosphate)lysine modification is found at K47. Pyridoxal 5'-phosphate-binding positions include N78, 182 to 186 (GSSGT), and S270.

The protein belongs to the cysteine synthase/cystathionine beta-synthase family. As to quaternary structure, homodimer. Pyridoxal 5'-phosphate is required as a cofactor.

It catalyses the reaction O-acetyl-L-serine + hydrogen sulfide = L-cysteine + acetate. Its pathway is amino-acid biosynthesis; L-cysteine biosynthesis; L-cysteine from L-serine: step 2/2. In terms of biological role, primarily catalyzes the formation of cysteine and acetate from O-acetylserine and hydrogen sulfide. Can also catalyze the formation of cysteine and acetate from S-sulfocysteine and hydrogen sulfide and the formation of cyanoalanine and hydrogen sulfide from either S-sulfocysteine or O-acetylserine and hydrogen cyanide. The sequence is that of Cysteine synthase 3 from Caenorhabditis elegans.